The following is a 156-amino-acid chain: Small ribosomal subunit protein uS7 (156 aa).

Belongs to the universal ribosomal protein uS7 family. Part of the 30S ribosomal subunit. Contacts proteins S9 and S11.

In terms of biological role, one of the primary rRNA binding proteins, it binds directly to 16S rRNA where it nucleates assembly of the head domain of the 30S subunit. Is located at the subunit interface close to the decoding center, probably blocks exit of the E-site tRNA. This chain is Small ribosomal subunit protein uS7, found in Burkholderia multivorans (strain ATCC 17616 / 249).